We begin with the raw amino-acid sequence, 105 residues long: Protein U4 (105 aa).

The chain crosses the membrane as a helical span at residues 5-25; the sequence is FLLFLLLLVLVINPSLVVNMV.

This sequence belongs to the nanovirus U4 protein family.

The protein resides in the membrane. The polypeptide is Protein U4 (DNA-U4) (Faba bean necrotic yellows virus (isolate Egyptian EV1-93) (FBNYV)).